The sequence spans 88 residues: Small ribosomal subunit protein bS16 (88 aa).

This sequence belongs to the bacterial ribosomal protein bS16 family.

This is Small ribosomal subunit protein bS16 from Geobacter sulfurreducens (strain ATCC 51573 / DSM 12127 / PCA).